We begin with the raw amino-acid sequence, 87 residues long: U3-theraphotoxin-Hhn1h (87 aa).

The N-terminal stretch at Met-1–Ala-24 is a signal peptide. Residues Ser-25–Arg-52 constitute a propeptide that is removed on maturation. Cystine bridges form between Cys-54-Cys-67, Cys-61-Cys-72, and Cys-66-Cys-79.

Belongs to the neurotoxin 10 (Hwtx-1) family. 51 (Hntx-8) subfamily. Hntx-8 sub-subfamily. In terms of tissue distribution, expressed by the venom gland.

It is found in the secreted. Its function is as follows. Ion channel inhibitor. In Cyriopagopus hainanus (Chinese bird spider), this protein is U3-theraphotoxin-Hhn1h.